Here is a 561-residue protein sequence, read N- to C-terminus: 2-succinyl-5-enolpyruvyl-6-hydroxy-3-cyclohexene-1-carboxylate synthase (561 aa).

It belongs to the TPP enzyme family. MenD subfamily. In terms of assembly, homodimer. It depends on Mg(2+) as a cofactor. Mn(2+) is required as a cofactor. Thiamine diphosphate serves as cofactor.

The catalysed reaction is isochorismate + 2-oxoglutarate + H(+) = 5-enolpyruvoyl-6-hydroxy-2-succinyl-cyclohex-3-ene-1-carboxylate + CO2. Its pathway is quinol/quinone metabolism; 1,4-dihydroxy-2-naphthoate biosynthesis; 1,4-dihydroxy-2-naphthoate from chorismate: step 2/7. It functions in the pathway cofactor biosynthesis; phylloquinone biosynthesis. In terms of biological role, catalyzes the thiamine diphosphate-dependent decarboxylation of 2-oxoglutarate and the subsequent addition of the resulting succinic semialdehyde-thiamine pyrophosphate anion to isochorismate to yield 2-succinyl-5-enolpyruvyl-6-hydroxy-3-cyclohexene-1-carboxylate (SEPHCHC). The polypeptide is 2-succinyl-5-enolpyruvyl-6-hydroxy-3-cyclohexene-1-carboxylate synthase (Synechococcus sp. (strain CC9605)).